A 330-amino-acid chain; its full sequence is Succinylglutamate desuccinylase (330 aa).

H53, E56, and H147 together coordinate Zn(2+). E210 is a catalytic residue.

This sequence belongs to the AspA/AstE family. Succinylglutamate desuccinylase subfamily. The cofactor is Zn(2+).

It catalyses the reaction N-succinyl-L-glutamate + H2O = L-glutamate + succinate. It participates in amino-acid degradation; L-arginine degradation via AST pathway; L-glutamate and succinate from L-arginine: step 5/5. Its function is as follows. Transforms N(2)-succinylglutamate into succinate and glutamate. This chain is Succinylglutamate desuccinylase, found in Yersinia enterocolitica serotype O:8 / biotype 1B (strain NCTC 13174 / 8081).